Reading from the N-terminus, the 407-residue chain is Arginine deiminase (407 aa).

The Amidino-cysteine intermediate role is filled by Cys-397.

The protein belongs to the arginine deiminase family.

The protein localises to the cytoplasm. The enzyme catalyses L-arginine + H2O = L-citrulline + NH4(+). It functions in the pathway amino-acid degradation; L-arginine degradation via ADI pathway; carbamoyl phosphate from L-arginine: step 1/2. This Listeria welshimeri serovar 6b (strain ATCC 35897 / DSM 20650 / CCUG 15529 / CIP 8149 / NCTC 11857 / SLCC 5334 / V8) protein is Arginine deiminase.